A 324-amino-acid polypeptide reads, in one-letter code: Adducin-related protein C1289.14 (324 aa).

Belongs to the aldolase class II family. Adducin subfamily.

The protein is Adducin-related protein C1289.14 of Schizosaccharomyces pombe (strain 972 / ATCC 24843) (Fission yeast).